The sequence spans 1099 residues: Sterol regulatory element-binding protein 2 (1099 aa).

Residues 1–47 form a transcriptional activation (acidic) region; it reads MDASEFMDTMDPSLSELGDEFTLGDIDEMLQFVSNQVDFPDIFEDQM. At 1 to 461 the chain is on the cytoplasmic side; the sequence is MDASEFMDTM…SCVGVMDRSR (461 aa). Residues 65 to 107 are disordered; sequence LTPPHTPVQTSSQTHTQTLTQAHTQTHTQTHTQTRTPPVLQPR. Residues 71–100 show a composition bias toward low complexity; that stretch reads PVQTSSQTHTQTLTQAHTQTHTQTHTQTRT. Positions 320 to 370 constitute a bHLH domain; sequence ERRTTHNIIEKRYRSSINDKILELRDLVLGNDAKMHKSGVLRKAIDYIKYL. The interval 370 to 391 is leucine-zipper; that stretch reads LQQVNHKLRQENLTLKMANQKN. The chain crosses the membrane as a helical span at residues 462 to 482; sequence LLLCALSFLCLSLNPLPSLLG. Residues 483–513 are Lumenal-facing; that stretch reads AEAPAGSPEVAGHGPTRTLFSLPAQTQSFGA. The helical transmembrane segment at 514-534 threads the bilayer; sequence WLWCVLPFLLVWVVSGVGVVW. The Cytoplasmic segment spans residues 535–1099; the sequence is GCVRVLYLWE…LSGGTTIAAS (565 aa).

It belongs to the SREBP family. As to quaternary structure, forms a tight complex with scap, the SCAP-SREBP complex, in the endoplasmic reticulum membrane. In terms of assembly, homodimer; efficient DNA binding of the soluble transcription factor fragment requires dimerization with another bHLH protein. Processed in the Golgi apparatus, releasing the protein from the membrane. At low cholesterol the SCAP-SREBP complex is recruited into COPII vesicles for export from the endoplasmic reticulum. In the Golgi, complex SREBPs are cleaved sequentially by site-1 (mbtps1, S1P) and site-2 (mbtps2, S2P) protease. The first cleavage by site-1 protease occurs within the luminal loop, the second cleavage by site-2 protease occurs within the first transmembrane domain, releasing the transcription factor from the Golgi membrane.

It is found in the endoplasmic reticulum membrane. Its subcellular location is the golgi apparatus membrane. The protein localises to the cytoplasmic vesicle. The protein resides in the COPII-coated vesicle membrane. It localises to the nucleus. Functionally, precursor of the transcription factor form (Processed sterol regulatory element-binding protein 2), which is embedded in the endoplasmic reticulum membrane. Low sterol concentrations promote processing of this form, releasing the transcription factor form that translocates into the nucleus and activates transcription of genes involved in cholesterol biosynthesis. Key transcription factor that regulates expression of genes involved in cholesterol biosynthesis. Binds to the sterol regulatory element 1 (SRE-1) (5'-ATCACCCCAC-3'). Has dual sequence specificity binding to both an E-box motif (5'-ATCACGTGA-3') and to SRE-1 (5'-ATCACCCCAC-3'). Regulates transcription of genes related to cholesterol synthesis pathway. Activated by mediated cholesterol efflux, transactivates NOTCH and promotes hematopoietic stem and progenitor cell emergence. In Danio rerio (Zebrafish), this protein is Sterol regulatory element-binding protein 2.